Consider the following 338-residue polypeptide: Glycerol-3-phosphate dehydrogenase [NAD(P)+] (338 aa).

3 residues coordinate NADPH: S13, W14, and K108. Sn-glycerol 3-phosphate contacts are provided by K108, G139, and S141. Position 143 (A143) interacts with NADPH. Positions 194, 247, 257, 258, and 259 each coordinate sn-glycerol 3-phosphate. The Proton acceptor role is filled by K194. R258 contacts NADPH. NADPH-binding residues include V282 and E284.

This sequence belongs to the NAD-dependent glycerol-3-phosphate dehydrogenase family.

The protein resides in the cytoplasm. The catalysed reaction is sn-glycerol 3-phosphate + NAD(+) = dihydroxyacetone phosphate + NADH + H(+). The enzyme catalyses sn-glycerol 3-phosphate + NADP(+) = dihydroxyacetone phosphate + NADPH + H(+). Its pathway is membrane lipid metabolism; glycerophospholipid metabolism. Its function is as follows. Catalyzes the reduction of the glycolytic intermediate dihydroxyacetone phosphate (DHAP) to sn-glycerol 3-phosphate (G3P), the key precursor for phospholipid synthesis. The chain is Glycerol-3-phosphate dehydrogenase [NAD(P)+] from Listeria innocua serovar 6a (strain ATCC BAA-680 / CLIP 11262).